We begin with the raw amino-acid sequence, 596 residues long: Zinc finger CCCH domain-containing protein 64 (596 aa).

Disordered regions lie at residues 243–263 and 272–291; these read LSPT…PPKT and DGAA…SQYW. 2 C3H1-type zinc fingers span residues 303 to 331 and 335 to 363; these read SQGE…HNAE and QCRR…HEFQ.

The chain is Zinc finger CCCH domain-containing protein 64 from Arabidopsis thaliana (Mouse-ear cress).